The primary structure comprises 362 residues: tRNA-specific 2-thiouridylase MnmA (362 aa).

Residues 6–13 (AMSGGVDS) and L32 each bind ATP. Catalysis depends on C101, which acts as the Nucleophile. Residues C101 and C197 are joined by a disulfide bond. G125 is a binding site for ATP. The tract at residues 147–149 (KDQ) is interaction with tRNA. C197 (cysteine persulfide intermediate) is an active-site residue.

It belongs to the MnmA/TRMU family.

The protein resides in the cytoplasm. The enzyme catalyses S-sulfanyl-L-cysteinyl-[protein] + uridine(34) in tRNA + AH2 + ATP = 2-thiouridine(34) in tRNA + L-cysteinyl-[protein] + A + AMP + diphosphate + H(+). In terms of biological role, catalyzes the 2-thiolation of uridine at the wobble position (U34) of tRNA, leading to the formation of s(2)U34. This Saccharopolyspora erythraea (strain ATCC 11635 / DSM 40517 / JCM 4748 / NBRC 13426 / NCIMB 8594 / NRRL 2338) protein is tRNA-specific 2-thiouridylase MnmA.